A 442-amino-acid chain; its full sequence is Radical S-adenosyl methionine domain-containing protein 1, mitochondrial (442 aa).

The N-terminal 17 residues, 1–17, are a transit peptide targeting the mitochondrion; that stretch reads MVPSGVRTGRWVAAARA. One can recognise a Radical SAM core domain in the interval 34-270; that stretch reads ESASTRAALY…RTVLRDAGFR (237 aa). Tyrosine 43 provides a ligand contact to S-adenosyl-L-methionine. 3 residues coordinate [4Fe-4S] cluster: cysteine 49, cysteine 53, and cysteine 56. S-adenosyl-L-methionine-binding positions include glycine 98, 99-100, glutamate 131, glutamine 158, arginine 170, and aspartate 195; that span reads GT.

This sequence belongs to the anaerobic coproporphyrinogen-III oxidase family. HemW subfamily. Requires [4Fe-4S] cluster as cofactor.

The protein localises to the mitochondrion. In terms of biological role, may be a heme chaperone, appears to bind heme. Homologous bacterial proteins do not have oxygen-independent coproporphyrinogen-III oxidase activity. Binds 1 [4Fe-4S] cluster. The cluster is coordinated with 3 cysteines and an exchangeable S-adenosyl-L-methionine. The polypeptide is Radical S-adenosyl methionine domain-containing protein 1, mitochondrial (Rsad1) (Mus musculus (Mouse)).